The chain runs to 437 residues: Sulfite reductase, dissimilatory-type subunit alpha (437 aa).

Residues cysteine 177, cysteine 183, cysteine 221, cysteine 225, cysteine 284, cysteine 303, cysteine 306, and cysteine 309 each contribute to the [4Fe-4S] cluster site. The 29-residue stretch at 294 to 322 folds into the 4Fe-4S ferredoxin-type domain; sequence SKLSIDNKECVRCMHCINTMPRALHIGDE.

As to quaternary structure, heterohexamer of two alpha, two beta and two gamma subunits.

In terms of biological role, part of the complex that catalyzes the reduction of sulfite to sulfide. The alpha and beta subunits may have arisen by gene duplication. They both bind 2 iron-sulfur clusters, but the alpha subunit seems to be catalytically inactive, due to substitutions along the putative substrate access channel, and because it binds sirohydrochlorin (the dematallated form of siroheme) instead of siroheme. The sequence is that of Sulfite reductase, dissimilatory-type subunit alpha (dsvA) from Nitratidesulfovibrio vulgaris (strain ATCC 29579 / DSM 644 / CCUG 34227 / NCIMB 8303 / VKM B-1760 / Hildenborough) (Desulfovibrio vulgaris).